The following is a 7158-amino-acid chain: Twitchin (7158 aa).

Ig-like domains lie at 5–97 (PRFT…INLN) and 111–204 (PSFV…LALN). 2 disulfides stabilise this stretch: Cys-25/Cys-81 and Cys-132/Cys-188. Disordered regions lie at residues 204-381 (NFEE…PIVL), 473-639 (EEEL…TKLR), 658-732 (KKVK…DSMA), and 763-955 (EVKE…IDMR). Residues 220-238 (TASPRPSSRGPGSRPSSPK) show a composition bias toward low complexity. Composition is skewed to basic and acidic residues over residues 242–259 (KSREGTPKRTLKPREGSP) and 279–291 (ESRRSSRTDKMEV). Low complexity-rich tracts occupy residues 319–340 (SPSTRKSPSRKSASPTPSRKGS) and 347–368 (SGTTGASASATSATSGGSASSD). One can recognise an Ig-like 3 domain in the interval 377 to 466 (PPIVLEASRS…GEGQSSAMVK (90 aa)). The segment covering 504 to 513 (RVARRSKSKS) has biased composition (basic residues). The span at 514–523 (KSPAPQAKKS) shows a compositional bias: low complexity. Composition is skewed to basic and acidic residues over residues 529–540 (GRQEASEVEHKR) and 601–618 (KTDSPPKQDDMFSRDTLL). Residues 620–630 (KTTTSTKNESS) show a composition bias toward low complexity. Residues 718–764 (VKSGAGGLEKSDSMASLKKLDLKKGKIDDNSDGAFKVQLKKVVKKEV) form a Kelch 1 repeat. Basic and acidic residues-rich tracts occupy residues 763 to 813 (EVKE…DKPK), 837 to 850 (KEVEEKSTSEELKA), 885 to 897 (KAHDDTNELEGIK), and 917 to 955 (SESRRGSVFGELRRGSRAPRDSADNSRRDSIRRSSIDMR). The Ig-like 4 domain maps to 980 to 1072 (PKIVEVPENV…DSADVKLLVT (93 aa)). A disordered region spans residues 1088–1118 (SQAGFQKDGEGGGAGGGGGEKKPMTEAERRQ). The segment covering 1106-1118 (GEKKPMTEAERRQ) has biased composition (basic and acidic residues). Ig-like domains lie at 1122 to 1213 (PGKK…AQLT), 1217 to 1306 (PPMK…SKVQ), and 1312 to 1398 (PRHT…AQLI). The cysteines at positions 1150 and 1201 are disulfide-linked. Fibronectin type-III domains are found at residues 1598-1690 (PKGP…AKNP), 1696-1791 (KPKN…MKAK), 1891-1988 (PPKG…IKDP), 1994-2087 (KPGR…AKPK), 2189-2282 (PNGP…AKNP), 2288-2383 (KTGT…AKPR), 2483-2576 (PLGP…AKNP), and 2579-2675 (VPGK…AKPR). A Kelch 2 repeat occupies 2014-2058 (PPHKDGGAPIEEYIVEVRDPDTKEWKEVKRVPDTNASISGLKEGK). Residues 2086–2181 (PKFIPAWLKH…GADEEKANLT (96 aa)) form the Ig-like 8 domain. The stretch at 2207 to 2253 (WKPPDDDGGEPIEYYEVEKLDTATGRWVPCAKVKDTKAHIDGLKKGQ) is one Kelch 3 repeat. The segment covering 2266-2287 (GASDALSTDKDTKAKNPYDEPG) has biased composition (basic and acidic residues). A disordered region spans residues 2266–2295 (GASDALSTDKDTKAKNPYDEPGKTGTPDVV). The Kelch 4 repeat unit spans residues 2502 to 2547 (KVPEDDGGAPIDHYEIEKMDLATGRWVPCGRSETTKTTVPNLQPGH). Residues 2679 to 2763 (PRIHREDLSD…TNINGTDSVT (85 aa)) enclose the Ig-like 9 domain. 2 consecutive Fibronectin type-III domains span residues 2775–2868 (PKGP…AKNP) and 2874–2968 (RPGR…AKPR). One copy of the Kelch 5 repeat lies at 2793–2839 (WKPPEDDGGEPIEFYEIEKMNTKDGIWVPCGRSGDTHFTVDSLNKGD). The interval 2849 to 2901 (NSEGPSDPLETETDILAKNPFDRPDRPGRPEPTDWDSDHVDLKWDPPLSDGGA) is disordered. A compositionally biased stretch (basic and acidic residues) spans 2868–2892 (PFDRPDRPGRPEPTDWDSDHVDLKW). Residues 2972 to 3062 (PHIDRDALKN…GEDEATVKIN (91 aa)) form the Ig-like 10 domain. Fibronectin type-III domains lie at 3070–3165 (PNGP…AKDP) and 3171–3265 (KTNA…AKAR). The stretch at 3089 to 3134 (RAPDDDGGIPIENYVIEKYDTASGRWVPAAKVAGDKTTAVVDGLIP) is one Kelch 6 repeat. The Ig-like 11 domain occupies 3268–3358 (PPVIDRNSIQ…GTDTAEVKVT (91 aa)). 2 Fibronectin type-III domains span residues 3365 to 3459 (SPRG…AKDP) and 3465 to 3559 (KPGT…AKPR). One copy of the Kelch 7 repeat lies at 3384–3430 (WKEPEDDGGAEISHYVIEKQDAATGRWTACGESKDTNFHVDDLTQGH). An Ig-like 12 domain is found at 3563-3653 (PKINRDMFVA…GKDEHEVDVN (91 aa)). 6 Fibronectin type-III domains span residues 3661-3753 (PEGP…AKNP), 3759-3853 (APTD…AKPR), 3954-4047 (PEGP…AKNQ), 4053-4146 (PVDK…TKAR), 4246-4340 (PEGP…AKDP), and 4346-4440 (KPGR…TAKP). A Kelch 8 repeat occupies 3972–4018 (WKPPTDNGGTDVLHYIVEKMDTSRGTWQEVGTFPDCTAKVNKLVPGK). 2 Kelch repeats span residues 4265 to 4310 (KPPK…LTEG) and 4365 to 4410 (DPPR…RVQK). The region spanning 4445 to 4531 (PKFDLDLDGK…GEAEANIKIT (87 aa)) is the Ig-like 13 domain. Fibronectin type-III domains are found at residues 4538–4631 (APEN…IKDP), 4637–4733 (APST…CRPY), 4739–4834 (APDA…IEEQ), 4936–5028 (PTGP…AKNP), 5034–5129 (APGQ…ADNA), 5231–5326 (SPQH…VAKY), 5333–5427 (QPEA…LKSR), and 5430–5528 (PPGP…IQES). Residues 4557-4602 (DAPKDDGGAEIAGYKIEYQEVGSQIWDKVPGLISGTAYTVRGLEHG) form a Kelch 11 repeat. Residues 5287–5335 (LNYTVGGLIKDNRYRFRVRAETQYGVSEPCELADVVVAKYQFEVPNQPE) form a Kelch 12 repeat. The region spanning 5533-5621 (PQIVVKPEDT…GSDTATANLV (89 aa)) is the Ig-like 14 domain. Fibronectin type-III domains lie at 5723-5817 (PQGP…ARLP) and 5823-5919 (SPLN…ASGS). Residues 5742-5787 (RPPVTDGGSKITSYVVEKRDLSKDEWVTVTSNVKDMNYIVTGLFEN) form a Kelch 13 repeat. Ig-like domains lie at 5923–6011 (PKIV…ANLR) and 6016–6107 (PRVF…VNVT). An intrachain disulfide couples Cys-5944 to Cys-5995. In terms of domain architecture, Fibronectin type-III 31 spans 6114-6207 (PPRFPIIENI…PTAPVLIPGD (94 aa)). Positions 6261–6516 (YDIHEELGTG…IHQALEHPWL (256 aa)) constitute a Protein kinase domain. Residues 6267 to 6275 (LGTGAFGVV) and Lys-6290 contribute to the ATP site. The active-site Proton acceptor is Asp-6382. The C-terminal regulatory domain (CDR) stretch occupies residues 6517–6581 (TPGNAPGRDS…SIRDAFWDRS (65 aa)). Ig-like domains follow at residues 6585-6673 (PRFI…VFLN), 6696-6795 (PRVE…CVLT), 6863-6952 (PSFT…ATLT), 6958-7059 (PLLN…ASLV), and 7067-7149 (PPVT…KAIA).

It belongs to the protein kinase superfamily. CAMK Ser/Thr protein kinase family. As to quaternary structure, may interact (via protein kinase and CRD domains) with mak-1 (via protein kinase domain). The cofactor is Mg(2+). Post-translationally, phosphorylated by mak-1 on the protein kinase domain and/or CDR domain in vitro. Expressed in body wall, anal, vulval, and pharyngeal muscles (at protein level).

Its subcellular location is the cytoplasm. The protein resides in the myofibril. The protein localises to the sarcomere. It is found in the a band. The catalysed reaction is L-seryl-[protein] + ATP = O-phospho-L-seryl-[protein] + ADP + H(+). The enzyme catalyses L-threonyl-[protein] + ATP = O-phospho-L-threonyl-[protein] + ADP + H(+). Forces generated by the contraction/relaxation cycles of muscle activity separate the regulatory domain from the catalytic core, activating the enzyme. At rest, the kinase domain is in a closed conformation. The active site is occupied by the autoinhibitory region (CDR), which makes extensive contact with the catalytic site, blocking substrate binding. At low forces the regulatory tail will unravel reversibly and expose the active site to its substrates, potentially stabilized by binding of Ca/CALM. At high forces the kinase begins to unfold and the integrity of the active site is disrupted. Regulator of muscle contraction and relaxation. Senses mechanical strain that occurs during muscle activity by unfolding in clearly resolvable steps at differing forces. Plays a role in the organization of sarcomeres in body wall muscles. The protein is Twitchin of Caenorhabditis elegans.